Here is a 590-residue protein sequence, read N- to C-terminus: Urease subunit alpha (590 aa).

A Urease domain is found at 134–590 (GGIDSHIHFI…LPLAQRYFLF (457 aa)). Positions 139, 141, and 222 each coordinate Ni(2+). The residue at position 222 (Lys222) is an N6-carboxylysine. His224 lines the substrate pocket. The Ni(2+) site is built by His251 and His277. The active-site Proton donor is His325. Position 365 (Asp365) interacts with Ni(2+). The segment at 388-416 (QQRGWLSPPAAGQGAGLSSAAGQGVDHDT) is disordered. Positions 393-411 (LSPPAAGQGAGLSSAAGQG) are enriched in low complexity.

Belongs to the metallo-dependent hydrolases superfamily. Urease alpha subunit family. As to quaternary structure, heterotrimer of UreA (gamma), UreB (beta) and UreC (alpha) subunits. Three heterotrimers associate to form the active enzyme. The cofactor is Ni cation. In terms of processing, carboxylation allows a single lysine to coordinate two nickel ions.

It localises to the cytoplasm. It catalyses the reaction urea + 2 H2O + H(+) = hydrogencarbonate + 2 NH4(+). The protein operates within nitrogen metabolism; urea degradation; CO(2) and NH(3) from urea (urease route): step 1/1. In Verminephrobacter eiseniae (strain EF01-2), this protein is Urease subunit alpha.